A 548-amino-acid polypeptide reads, in one-letter code: mRNA cleavage and polyadenylation factor CLP1 (548 aa).

ATP-binding positions include E19, K60, and 123 to 128 (SSGKTT). The segment covering 437–481 (ESEVKEEVKEEKNEKDGEIKQDGEGEKKGEGKGEGEGEGEGKYGE) has biased composition (basic and acidic residues). The disordered stretch occupies residues 437 to 500 (ESEVKEEVKE…DEEEVPFREE (64 aa)). The segment covering 482–494 (EEGEAEGEDDEEE) has biased composition (acidic residues).

The protein belongs to the Clp1 family. Clp1 subfamily. In terms of assembly, component of a pre-mRNA cleavage factor complex. Interacts directly with PCF11.

It is found in the nucleus. Its function is as follows. Required for endonucleolytic cleavage during polyadenylation-dependent pre-mRNA 3'-end formation. The chain is mRNA cleavage and polyadenylation factor CLP1 from Cryptococcus neoformans var. neoformans serotype D (strain B-3501A) (Filobasidiella neoformans).